Consider the following 537-residue polypeptide: MANSKYEYVKSFEVEDEVMFPNLIIIRIDGRDFSRFSQVHKFEKPNDETSLNLMNSCASSVLVEYPDIVFAYGYSDEYSFVFKKASRFYQRRASKILSLVASFFAAVYVTKWKEFFPHTKLEYAPSFASKVVSCASVEVLQAYLAWRQHDCHISNQYDTCLWMLVKSGKTLSETQEILKDTQKQQRNELLFQQFGINYKMLPVLFRQGSCLFKTKVIFSIISFFYFLLEETVKHDENGKPVKRLRRRETLVHSENVAGRSFWNEHSSLHKDLGHFAKDIGKIEPDYVKSFQFESRLLPLTWVVVRIDGCHFHRFSEVHEFEKPNDEQALKLMNSCAVAVLEEFQDIAFAYGVSDEFSFVLKNKSELYKRQSSKIISAVVSFFTSTYMMRWGDFFPHKKLKYPPSFDGRAVCYPTSDILLDYLAWRQVDCHINNQYNTCFWMLVKSGKSKIQAQDYLKGTQTREKNELLSQQFGIEYNSLPVIFRMGSSVFRLKTQEGVTEENGEVSGKQVEAEVGVDYSNIIDQCFWQQHPHILSFS.

The Mg(2+) site is built by D307, G308, and D354. Residues 307–312 and 353–354 contribute to the GTP site; these read DGCHFH and SD.

Belongs to the tRNA(His) guanylyltransferase family. Mg(2+) serves as cofactor.

It is found in the nucleus. It localises to the nucleoplasm. The catalysed reaction is a 5'-end ribonucleotide-tRNA(His) + GTP + ATP + H2O = a 5'-end phospho-guanosine-ribonucleotide-tRNA(His) + AMP + 2 diphosphate + H(+). Adds a GMP to the 5'-end of tRNA(His) after transcription and RNase P cleavage. This Arabidopsis thaliana (Mouse-ear cress) protein is tRNA(His) guanylyltransferase 2 (THG2).